The primary structure comprises 350 residues: MPVLHNRISNDELKAKMLAESEPRTTISFYKYFTIASPQQTRDALYQVFTALDVFGRVYLAHEGINAQISVPQSKLETFRQQLYTFDPALDGLRLNIALEDDGKSFWVLRMKVRDRIVADGIDDPTFDASNVGDYLKAADVNAMLDDPDAVFIDMRNHYEYEVGHFENALEIPADTFREQLPKAVEMLREHADKKIVMYCTGGIRCEKASAWMKHNGFNKVWHIEGGIIEYARRAREQGLPVRFIGKNFVFDERMGERISDEVIAHCHQCGAPCDSHTNCKNDGCHLLFIQCPQCASKFNGCCSEQCCEELALPEEEQRRRRAGRENGNKIFNKSRGRLNSKLSIPDPAE.

Residues 146 to 240 form the Rhodanese domain; it reads DDPDAVFIDM…YARRAREQGL (95 aa). The Cysteine persulfide intermediate role is filled by cysteine 200. Basic and acidic residues predominate over residues 319 to 328; it reads RRRRAGRENG. The segment at 319-350 is disordered; sequence RRRRAGRENGNKIFNKSRGRLNSKLSIPDPAE.

It belongs to the TrhO family.

The catalysed reaction is uridine(34) in tRNA + AH2 + O2 = 5-hydroxyuridine(34) in tRNA + A + H2O. Its function is as follows. Catalyzes oxygen-dependent 5-hydroxyuridine (ho5U) modification at position 34 in tRNAs. This is tRNA uridine(34) hydroxylase from Salmonella schwarzengrund (strain CVM19633).